The chain runs to 67 residues: LPS-assembly lipoprotein LptM (67 aa).

Residues 1-19 (MKNVFKALTVLLTLFSLTG) form the signal peptide. A lipid anchor (N-palmitoyl cysteine) is attached at cysteine 20. The S-diacylglycerol cysteine moiety is linked to residue cysteine 20. A disordered region spans residues 26 to 67 (LYFPPADKNAPPPTKPVETQTQSTVPDKNDRATGDGPSQVNY). Polar residues predominate over residues 42–51 (VETQTQSTVP).

This sequence belongs to the LptM family. As to quaternary structure, interacts with the outer membrane embedded portion of the LPS translocon formed by LptD and LptE (LptDE).

The protein localises to the cell outer membrane. Its function is as follows. Component of the lipopolysaccharide (LPS) transport (Lpt) pathway that promotes efficient assembly of the outer membrane LPS translocon (LptDE) by the BAM complex. Facilitates oxidative maturation of LptD by stabilizing a conformation of the LPS translocon in which LptD can efficiently acquire native disulfide bonds, thereby activating the LPS translocon. In Escherichia coli O157:H7, this protein is LPS-assembly lipoprotein LptM.